Here is a 54-residue protein sequence, read N- to C-terminus: Hemoglobin subunit omega (54 aa).

One can recognise a Globin domain in the interval 2–54; the sequence is HWTAEEKQIILAIWAKIDIEEAGAAALSRLLVVYPWTQRYFKNFGNLSSPTAI.

This sequence belongs to the globin family.

Functionally, hemoglobin omega chain is an embryonic-type beta-type chain found in prenatal and neonatal marsupials. The polypeptide is Hemoglobin subunit omega (Notamacropus eugenii (Tammar wallaby)).